We begin with the raw amino-acid sequence, 1035 residues long: Integrin alpha-9 (1035 aa).

Residues 1 to 29 (MGGPAAPRGAGRLRALLLALVVAGIPAGA) form the signal peptide. Residues 30 to 981 (YNLDPQRPVH…LEPRGYVVGW (952 aa)) lie on the Extracellular side of the membrane. 7 FG-GAP repeats span residues 35-96 (QRPV…PDRR), 111-174 (SCGK…AKGR), 182-232 (EYKK…NTYL), 233-289 (KLND…SGTL), 290-349 (IKIF…GALE), 351-408 (QLAL…GIVP), and 411-474 (SMKL…LPGS). 3 disulfide bridges follow: cysteine 87/cysteine 97, cysteine 142/cysteine 162, and cysteine 179/cysteine 194. The N-linked (GlcNAc...) asparagine glycan is linked to asparagine 225. Residues aspartate 312, asparagine 314, aspartate 316, aspartate 320, aspartate 373, aspartate 375, aspartate 377, aspartate 381, aspartate 435, aspartate 437, asparagine 439, and aspartate 443 each coordinate Ca(2+). An N-linked (GlcNAc...) asparagine glycan is attached at asparagine 476. Cysteine 482 and cysteine 491 are disulfide-bonded. Asparagine 493 carries N-linked (GlcNAc...) asparagine glycosylation. The cysteines at positions 497 and 555 are disulfide-linked. A glycan (N-linked (GlcNAc...) asparagine) is linked at asparagine 612. Residues cysteine 620 and cysteine 625 are joined by a disulfide bond. Residues asparagine 654, asparagine 658, asparagine 672, and asparagine 676 are each glycosylated (N-linked (GlcNAc...) asparagine). Residues cysteine 696 and cysteine 706 are joined by a disulfide bond. N-linked (GlcNAc...) asparagine glycosylation is found at asparagine 807 and asparagine 854. Intrachain disulfides connect cysteine 855–cysteine 891 and cysteine 898–cysteine 903. An N-linked (GlcNAc...) asparagine glycan is attached at asparagine 904. Residues 982 to 1002 (IIAISLLVGILIFLLLAVLLW) form a helical membrane-spanning segment. Over 1003–1035 (KMGFFRRRYKEIIEAEKNRKENEDSWDWVQKNQ) the chain is Cytoplasmic. Residues 1005 to 1009 (GFFRR) carry the GFFKR motif motif.

Belongs to the integrin alpha chain family. Heterodimer of an alpha and a beta subunit. Alpha-9 (ITGA9) associates with beta-1 (ITGB1). Integrin ITGA9:ITGB1 interacts with FBLN5 (via N-terminus). Integrin ITGA9:ITGB1 interacts with SPP1/OPN (via N-terminus). Integrin ITGA9:ITGB1 interacts with TNC/TNFN3 (via the 3rd Fibronectin type-III domain). Integrin ITGA9:ITGB1 interacts with SVEP1/polydom (via Sushi domain 21); thereby inhibits Ca(2+) intracellular signaling and as a result represses vasocontraction. In terms of tissue distribution, expressed in vascular smooth muscle cells (at protein level). Expressed in the airway epithelium (at protein level).

It localises to the membrane. In terms of biological role, integrin alpha-9/beta-1 (ITGA9:ITGB1) is a receptor for VCAM1, cytotactin and osteopontin. It recognizes the sequence A-E-I-D-G-I-E-L in cytotactin. ITGA9:ITGB1 may play a crucial role in SVEP1/polydom-mediated myoblast cell adhesion. Integrin ITGA9:ITGB1 represses PRKCA-mediated L-type voltage-gated channel Ca(2+) influx and ROCK-mediated calcium sensitivity in vascular smooth muscle cells via its interaction with SVEP1, thereby inhibiting vasocontraction. This chain is Integrin alpha-9 (ITGA9), found in Homo sapiens (Human).